Reading from the N-terminus, the 333-residue chain is D-fructose 1,6-bisphosphatase class 2/sedoheptulose 1,7-bisphosphatase (333 aa).

Mn(2+) contacts are provided by Asp33, Glu57, Asp85, and Glu88. Substrate is bound by residues 88–90 (EGT), Tyr119, 164–166 (RTR), and 186–188 (DGD). Glu213 contributes to the Mn(2+) binding site.

The protein belongs to the FBPase class 2 family. As to quaternary structure, homotetramer. Mn(2+) is required as a cofactor.

It carries out the reaction beta-D-fructose 1,6-bisphosphate + H2O = beta-D-fructose 6-phosphate + phosphate. The enzyme catalyses D-sedoheptulose 1,7-bisphosphate + H2O = D-sedoheptulose 7-phosphate + phosphate. It participates in carbohydrate biosynthesis; Calvin cycle. Functionally, catalyzes the hydrolysis of fructose 1,6-bisphosphate (Fru 1,6-P2) and sedoheptulose 1,7-bisphosphate (Sed 1,7-P2) to fructose 6-phosphate and sedoheptulose 7-phosphate, respectively. This Prochlorococcus marinus (strain MIT 9312) protein is D-fructose 1,6-bisphosphatase class 2/sedoheptulose 1,7-bisphosphatase.